A 198-amino-acid chain; its full sequence is Alpha1-proteinase inhibitor-degradation deficient protein 37 (198 aa).

At serine 79 the chain carries Phosphoserine.

Its subcellular location is the cytoplasm. Functionally, involved in ER-associated protein degradation (ERAD). The polypeptide is Alpha1-proteinase inhibitor-degradation deficient protein 37 (ADD37) (Saccharomyces cerevisiae (strain ATCC 204508 / S288c) (Baker's yeast)).